Here is a 90-residue protein sequence, read N- to C-terminus: Acylphosphatase (90 aa).

Residues 4-90 (TRRVRFYGRV…TEFQDFQIKR (87 aa)) enclose the Acylphosphatase-like domain. Catalysis depends on residues Arg19 and Asn37.

Belongs to the acylphosphatase family.

The enzyme catalyses an acyl phosphate + H2O = a carboxylate + phosphate + H(+). The chain is Acylphosphatase (acyP) from Thermoplasma volcanium (strain ATCC 51530 / DSM 4299 / JCM 9571 / NBRC 15438 / GSS1).